The chain runs to 180 residues: ATP synthase subunit delta (180 aa).

Belongs to the ATPase delta chain family. In terms of assembly, F-type ATPases have 2 components, F(1) - the catalytic core - and F(0) - the membrane proton channel. F(1) has five subunits: alpha(3), beta(3), gamma(1), delta(1), epsilon(1). F(0) has three main subunits: a(1), b(2) and c(10-14). The alpha and beta chains form an alternating ring which encloses part of the gamma chain. F(1) is attached to F(0) by a central stalk formed by the gamma and epsilon chains, while a peripheral stalk is formed by the delta and b chains.

The protein localises to the cell membrane. Its function is as follows. F(1)F(0) ATP synthase produces ATP from ADP in the presence of a proton or sodium gradient. F-type ATPases consist of two structural domains, F(1) containing the extramembraneous catalytic core and F(0) containing the membrane proton channel, linked together by a central stalk and a peripheral stalk. During catalysis, ATP synthesis in the catalytic domain of F(1) is coupled via a rotary mechanism of the central stalk subunits to proton translocation. In terms of biological role, this protein is part of the stalk that links CF(0) to CF(1). It either transmits conformational changes from CF(0) to CF(1) or is implicated in proton conduction. This is ATP synthase subunit delta from Enterococcus faecalis (strain ATCC 700802 / V583).